The chain runs to 184 residues: UPF0397 protein SAOUHSC_03020 (184 aa).

The next 5 helical transmembrane spans lie at 11 to 31 (VVAIGIGAAVFVILGRFVVIP), 44 to 64 (AFLALISAIFGPFAGLMTGLV), 77 to 97 (AWWSWVICSGIIGCLYGWIGL), 116 to 136 (IGQIIANIICWALIAPTLDIL), and 148 to 168 (QGVISAVLNIISVGIIGTILL).

It belongs to the UPF0397 family.

It localises to the cell membrane. This chain is UPF0397 protein SAOUHSC_03020, found in Staphylococcus aureus (strain NCTC 8325 / PS 47).